We begin with the raw amino-acid sequence, 206 residues long: MRLSEDENYFEIEEKLLNEGYRFICGVDEAGRGPLAGPVFAAAVVMDRKRIIEGVRDSKKLTPKKREKLFEEIIKESIAYSVAMVDSKVIDEININNATFLAMKNAIENLKIEPDIVLVDGYKIPNLGFNQRAIIKGDRKSYSIACASILAKVSRDRYIVEISSKYPLYKFEKHKGYGTKEHIEILQKYGPCEIHRISFLKNILSL.

Residues 22–206 form the RNase H type-2 domain; the sequence is RFICGVDEAG…ISFLKNILSL (185 aa). Residues Asp-28, Glu-29, and Asp-120 each contribute to the a divalent metal cation site.

This sequence belongs to the RNase HII family. It depends on Mn(2+) as a cofactor. Mg(2+) is required as a cofactor.

It is found in the cytoplasm. It catalyses the reaction Endonucleolytic cleavage to 5'-phosphomonoester.. In terms of biological role, endonuclease that specifically degrades the RNA of RNA-DNA hybrids. This Caldicellulosiruptor bescii (strain ATCC BAA-1888 / DSM 6725 / KCTC 15123 / Z-1320) (Anaerocellum thermophilum) protein is Ribonuclease HII.